The chain runs to 155 residues: 6,7-dimethyl-8-ribityllumazine synthase (155 aa).

5-amino-6-(D-ribitylamino)uracil contacts are provided by residues F23, 57–59 (AFE), and 83–85 (AVI). 88 to 89 (AT) lines the (2S)-2-hydroxy-3-oxobutyl phosphate pocket. H91 (proton donor) is an active-site residue. F114 contributes to the 5-amino-6-(D-ribitylamino)uracil binding site. R128 provides a ligand contact to (2S)-2-hydroxy-3-oxobutyl phosphate.

Belongs to the DMRL synthase family.

It carries out the reaction (2S)-2-hydroxy-3-oxobutyl phosphate + 5-amino-6-(D-ribitylamino)uracil = 6,7-dimethyl-8-(1-D-ribityl)lumazine + phosphate + 2 H2O + H(+). Its pathway is cofactor biosynthesis; riboflavin biosynthesis; riboflavin from 2-hydroxy-3-oxobutyl phosphate and 5-amino-6-(D-ribitylamino)uracil: step 1/2. Its function is as follows. Catalyzes the formation of 6,7-dimethyl-8-ribityllumazine by condensation of 5-amino-6-(D-ribitylamino)uracil with 3,4-dihydroxy-2-butanone 4-phosphate. This is the penultimate step in the biosynthesis of riboflavin. The protein is 6,7-dimethyl-8-ribityllumazine synthase of Leptospira biflexa serovar Patoc (strain Patoc 1 / Ames).